Reading from the N-terminus, the 243-residue chain is Zinc import ATP-binding protein ZnuC (243 aa).

Positions 4 to 219 (IAAHHLAVRR…PEYRALFGHG (216 aa)) constitute an ABC transporter domain. An ATP-binding site is contributed by 36-43 (GPNGSGKS).

Belongs to the ABC transporter superfamily. Zinc importer (TC 3.A.1.15.5) family. In terms of assembly, the complex is composed of two ATP-binding proteins (ZnuC), two transmembrane proteins (ZnuB) and a solute-binding protein (ZnuA).

It is found in the cell inner membrane. It carries out the reaction Zn(2+)(out) + ATP(in) + H2O(in) = Zn(2+)(in) + ADP(in) + phosphate(in) + H(+)(in). Its function is as follows. Part of the ABC transporter complex ZnuABC involved in zinc import. Responsible for energy coupling to the transport system. This Cereibacter sphaeroides (strain ATCC 17023 / DSM 158 / JCM 6121 / CCUG 31486 / LMG 2827 / NBRC 12203 / NCIMB 8253 / ATH 2.4.1.) (Rhodobacter sphaeroides) protein is Zinc import ATP-binding protein ZnuC.